A 264-amino-acid polypeptide reads, in one-letter code: Enhancer of mRNA-decapping protein 1 (264 aa).

Disordered stretches follow at residues 1–180 (MLAQ…FSTI) and 193–264 (YNNP…LRDY). Positions 63–74 (GKKSTSKPKSKS) are enriched in basic residues. Residues 83–92 (NFKLTASPSL) show a composition bias toward polar residues. Pro residues predominate over residues 108–118 (PSPPPPPPPST). 3 stretches are compositionally biased toward low complexity: residues 119–134 (QPSTSTSTSPTPRTST), 161–172 (NGKKPNFFNNNN), and 208–226 (NNNNNNSSNNSNNSNNSNS). Residues 248–264 (FKSNNGSPRQSSGLRDY) show a composition bias toward polar residues.

It belongs to the EDC family.

Its subcellular location is the cytoplasm. MRNA-binding protein which stimulates mRNA decapping. This Candida albicans (strain SC5314 / ATCC MYA-2876) (Yeast) protein is Enhancer of mRNA-decapping protein 1 (EDC1).